A 111-amino-acid chain; its full sequence is uncharacterized protein (111 aa).

A helical transmembrane segment spans residues 60 to 80; the sequence is TFGRFLAHISCLICILSKRIF.

Its subcellular location is the mitochondrion membrane. This is an uncharacterized protein from Arabidopsis thaliana (Mouse-ear cress).